The chain runs to 388 residues: Succinate--CoA ligase [ADP-forming] subunit beta (388 aa).

The region spanning Lys-9–Gln-244 is the ATP-grasp domain. ATP-binding positions include Lys-46, Gly-53 to Gly-55, Glu-99, Thr-102, and Glu-107. The Mg(2+) site is built by Asn-199 and Asp-213. Residues Asn-264 and Gly-321–Val-323 contribute to the substrate site.

This sequence belongs to the succinate/malate CoA ligase beta subunit family. In terms of assembly, heterotetramer of two alpha and two beta subunits. Mg(2+) is required as a cofactor.

It catalyses the reaction succinate + ATP + CoA = succinyl-CoA + ADP + phosphate. The enzyme catalyses GTP + succinate + CoA = succinyl-CoA + GDP + phosphate. Its pathway is carbohydrate metabolism; tricarboxylic acid cycle; succinate from succinyl-CoA (ligase route): step 1/1. Its function is as follows. Succinyl-CoA synthetase functions in the citric acid cycle (TCA), coupling the hydrolysis of succinyl-CoA to the synthesis of either ATP or GTP and thus represents the only step of substrate-level phosphorylation in the TCA. The beta subunit provides nucleotide specificity of the enzyme and binds the substrate succinate, while the binding sites for coenzyme A and phosphate are found in the alpha subunit. In Shigella boydii serotype 18 (strain CDC 3083-94 / BS512), this protein is Succinate--CoA ligase [ADP-forming] subunit beta.